The chain runs to 337 residues: Glyceraldehyde-3-phosphate dehydrogenase 1, cytosolic (337 aa).

Positions 1–151 (MGKIKIGING…YTSDVNIVSN (151 aa)) are binding to NAD. NAD(+) is bound by residues 13 to 14 (RI), aspartate 35, and arginine 82. The tract at residues 152–337 (ASCTTNCLAP…DLIRHMFKTQ (186 aa)) is catalytic. D-glyceraldehyde 3-phosphate-binding positions include 153-155 (SCT), threonine 184, 213-214 (TG), and arginine 236. Cysteine 154 (nucleophile) is an active-site residue. Asparagine 318 lines the NAD(+) pocket.

It belongs to the glyceraldehyde-3-phosphate dehydrogenase family. As to quaternary structure, homotetramer.

Its subcellular location is the cytoplasm. It catalyses the reaction D-glyceraldehyde 3-phosphate + phosphate + NAD(+) = (2R)-3-phospho-glyceroyl phosphate + NADH + H(+). Its pathway is carbohydrate degradation; glycolysis; pyruvate from D-glyceraldehyde 3-phosphate: step 1/5. Functionally, key enzyme in glycolysis that catalyzes the first step of the pathway by converting D-glyceraldehyde 3-phosphate (G3P) into 3-phospho-D-glyceroyl phosphate. Essential for the maintenance of cellular ATP levels and carbohydrate metabolism. The sequence is that of Glyceraldehyde-3-phosphate dehydrogenase 1, cytosolic (GAPC1) from Zea mays (Maize).